Reading from the N-terminus, the 458-residue chain is GTPase Der (458 aa).

2 consecutive EngA-type G domains span residues 3–167 and 176–351; these read PVVV…PETE and IKLA…AQYT. GTP-binding positions include 9 to 16, 56 to 60, 119 to 122, 182 to 189, 229 to 233, and 294 to 297; these read GRPNVGKS, DTGGF, NKID, DTAGL, and NKWD. In terms of domain architecture, KH-like spans 352–436; the sequence is FNIKTGELNN…PIRLFFREKP (85 aa).

It belongs to the TRAFAC class TrmE-Era-EngA-EngB-Septin-like GTPase superfamily. EngA (Der) GTPase family. Associates with the 50S ribosomal subunit.

Functionally, GTPase that plays an essential role in the late steps of ribosome biogenesis. This chain is GTPase Der, found in Desulfosudis oleivorans (strain DSM 6200 / JCM 39069 / Hxd3) (Desulfococcus oleovorans).